We begin with the raw amino-acid sequence, 152 residues long: D-aminoacyl-tRNA deacylase (152 aa).

The Gly-cisPro motif, important for rejection of L-amino acids signature appears at 142–143 (GP).

It belongs to the DTD family. Homodimer.

It localises to the cytoplasm. It carries out the reaction glycyl-tRNA(Ala) + H2O = tRNA(Ala) + glycine + H(+). The catalysed reaction is a D-aminoacyl-tRNA + H2O = a tRNA + a D-alpha-amino acid + H(+). Its function is as follows. An aminoacyl-tRNA editing enzyme that deacylates mischarged D-aminoacyl-tRNAs. Also deacylates mischarged glycyl-tRNA(Ala), protecting cells against glycine mischarging by AlaRS. Acts via tRNA-based rather than protein-based catalysis; rejects L-amino acids rather than detecting D-amino acids in the active site. By recycling D-aminoacyl-tRNA to D-amino acids and free tRNA molecules, this enzyme counteracts the toxicity associated with the formation of D-aminoacyl-tRNA entities in vivo and helps enforce protein L-homochirality. This Burkholderia mallei (strain NCTC 10247) protein is D-aminoacyl-tRNA deacylase.